The chain runs to 287 residues: D-alanine--D-alanine ligase (287 aa).

Positions 98 to 283 constitute an ATP-grasp domain; that stretch reads KTKQIAQSVG…FDDVVRITVE (186 aa). Position 124–169 (124–169) interacts with ATP; it reads PVIIKPVDEGSSKGLFLCNNKEEAEEAVKKLAKPIIEDYIIGEELT. Positions 238, 250, and 252 each coordinate Mg(2+).

It belongs to the D-alanine--D-alanine ligase family. Requires Mg(2+) as cofactor. The cofactor is Mn(2+).

Its subcellular location is the cytoplasm. It carries out the reaction 2 D-alanine + ATP = D-alanyl-D-alanine + ADP + phosphate + H(+). Its pathway is cell wall biogenesis; peptidoglycan biosynthesis. Functionally, cell wall formation. In Fusobacterium nucleatum subsp. nucleatum (strain ATCC 25586 / DSM 15643 / BCRC 10681 / CIP 101130 / JCM 8532 / KCTC 2640 / LMG 13131 / VPI 4355), this protein is D-alanine--D-alanine ligase.